Reading from the N-terminus, the 306-residue chain is MALDFLAGCAGGVAGVIVGHPFDIVKVRLQVQSTEKPQYRGTLHCFQSIIKQESVLGLYKGLGSPLMGLTFINALVFGVQGNTLRALGQDSPLNQFLAGAAAGAIQCVICCPMELAKTRLQLQAVGPARTYKGSLDCLVQIYRHEGLRGINRGMVSTLLRETPSFGVYFLTYDVMTRAMGCEPGDRLLVPKLLLAGGTSGITSWLSTYPMDVVKSRLQADGLQGTPRYRGIVDCMRQSYQAEGWQVFTRGLASTLLRAFPVNAATFATVTVVLTYTRGEEAQVDSEAALGTSPTPAGSALAQPSSL.

The next 6 membrane-spanning stretches (helical) occupy residues 2-22 (ALDF…GHPF), 61-81 (GLGS…GVQG), 96-116 (FLAG…MELA), 153-172 (GMVS…FLTY), 187-207 (LLVP…WLST), and 255-275 (LLRA…VLTY). 3 Solcar repeats span residues 2-86 (ALDF…TLRA), 90-178 (DSPL…MTRA), and 190-275 (PKLL…VLTY). Residues 284-306 (DSEAALGTSPTPAGSALAQPSSL) are disordered. The segment covering 291-306 (TSPTPAGSALAQPSSL) has biased composition (polar residues).

The protein belongs to the mitochondrial carrier (TC 2.A.29) family. Widely expressed, with highest levels in the brain, including cortex, cerebellum, hippocampus and hypothalamus, and moderate levels in liver, kidney, heart and testis.

The protein resides in the mitochondrion inner membrane. The enzyme catalyses L-lysine(out) + L-arginine(in) = L-lysine(in) + L-arginine(out). The catalysed reaction is L-histidine(out) + L-arginine(in) = L-histidine(in) + L-arginine(out). It catalyses the reaction L-ornithine(in) + L-arginine(out) = L-ornithine(out) + L-arginine(in). It carries out the reaction L-homoarginine(in) + L-arginine(out) = L-homoarginine(out) + L-arginine(in). The enzyme catalyses N(omega)-methyl-L-arginine(in) + L-arginine(out) = N(omega)-methyl-L-arginine(out) + L-arginine(in). The catalysed reaction is L-arginine(in) = L-arginine(out). It catalyses the reaction L-lysine(in) = L-lysine(out). It carries out the reaction L-ornithine(in) = L-ornithine(out). The enzyme catalyses L-histidine(out) = L-histidine(in). Mitochondrial transporter of arginine, lysine, homoarginine, methylarginine. Transports with a much lesser extent, ornithine and histidine. Does not transport carnitine nor acylcarnitines. Functions by both counter-exchange and uniport mechanisms. Plays a physiological role in the import of basic amino acids into mitochondria for mitochondrial protein synthesis and amino acid degradation. In Mus musculus (Mouse), this protein is Mitochondrial basic amino acids transporter (Slc25a29).